The primary structure comprises 482 residues: Bifunctional protein GlmU (482 aa).

The interval 1 to 241 (MTASTEAAVV…SALVTGVNDR (241 aa)) is pyrophosphorylase. UDP-N-acetyl-alpha-D-glucosamine contacts are provided by residues 12–15 (LAAG), Lys-26, Gln-83, 88–89 (GT), 112–114 (SGD), Gly-151, Glu-166, Asn-181, and Asn-239. A Mg(2+)-binding site is contributed by Asp-114. A Mg(2+)-binding site is contributed by Asn-239. Positions 242-262 (VQLSDLGKVLNRRIVAAHQRA) are linker. Residues 263–482 (GVTIIDPGST…AARKALGDES (220 aa)) are N-acetyltransferase. The UDP-N-acetyl-alpha-D-glucosamine site is built by Arg-344 and Lys-362. His-374 serves as the catalytic Proton acceptor. 2 residues coordinate UDP-N-acetyl-alpha-D-glucosamine: Tyr-377 and Asn-388. Residues Ala-391, 397-398 (NY), Ser-416, and Ala-434 each bind acetyl-CoA. The disordered stretch occupies residues 463 to 482 (KKRPGSAADKAARKALGDES). Over residues 472–482 (KAARKALGDES) the composition is skewed to basic and acidic residues.

In the N-terminal section; belongs to the N-acetylglucosamine-1-phosphate uridyltransferase family. This sequence in the C-terminal section; belongs to the transferase hexapeptide repeat family. As to quaternary structure, homotrimer. It depends on Mg(2+) as a cofactor.

Its subcellular location is the cytoplasm. It carries out the reaction alpha-D-glucosamine 1-phosphate + acetyl-CoA = N-acetyl-alpha-D-glucosamine 1-phosphate + CoA + H(+). The enzyme catalyses N-acetyl-alpha-D-glucosamine 1-phosphate + UTP + H(+) = UDP-N-acetyl-alpha-D-glucosamine + diphosphate. It functions in the pathway nucleotide-sugar biosynthesis; UDP-N-acetyl-alpha-D-glucosamine biosynthesis; N-acetyl-alpha-D-glucosamine 1-phosphate from alpha-D-glucosamine 6-phosphate (route II): step 2/2. The protein operates within nucleotide-sugar biosynthesis; UDP-N-acetyl-alpha-D-glucosamine biosynthesis; UDP-N-acetyl-alpha-D-glucosamine from N-acetyl-alpha-D-glucosamine 1-phosphate: step 1/1. It participates in bacterial outer membrane biogenesis; LPS lipid A biosynthesis. Its function is as follows. Catalyzes the last two sequential reactions in the de novo biosynthetic pathway for UDP-N-acetylglucosamine (UDP-GlcNAc). The C-terminal domain catalyzes the transfer of acetyl group from acetyl coenzyme A to glucosamine-1-phosphate (GlcN-1-P) to produce N-acetylglucosamine-1-phosphate (GlcNAc-1-P), which is converted into UDP-GlcNAc by the transfer of uridine 5-monophosphate (from uridine 5-triphosphate), a reaction catalyzed by the N-terminal domain. The sequence is that of Bifunctional protein GlmU from Mycolicibacterium smegmatis (strain ATCC 700084 / mc(2)155) (Mycobacterium smegmatis).